Consider the following 225-residue polypeptide: Ribonuclease 3 (225 aa).

Residues 5–127 form the RNase III domain; sequence MNKLTSKLGY…IIGAIYLDSD (123 aa). Glu40 provides a ligand contact to Mg(2+). Asp44 is an active-site residue. Asp113 and Glu116 together coordinate Mg(2+). Glu116 is a catalytic residue. The DRBM domain maps to 154–224; sequence DPKTRLQEFL…AETALEQLTN (71 aa).

This sequence belongs to the ribonuclease III family. Homodimer. Requires Mg(2+) as cofactor.

It localises to the cytoplasm. The catalysed reaction is Endonucleolytic cleavage to 5'-phosphomonoester.. Functionally, digests double-stranded RNA. Involved in the processing of primary rRNA transcript to yield the immediate precursors to the large and small rRNAs (23S and 16S). Processes some mRNAs, and tRNAs when they are encoded in the rRNA operon. Processes pre-crRNA and tracrRNA of type II CRISPR loci if present in the organism. The sequence is that of Ribonuclease 3 from Vibrio cholerae serotype O1 (strain ATCC 39315 / El Tor Inaba N16961).